We begin with the raw amino-acid sequence, 412 residues long: 2,3-bisphosphoglycerate-independent phosphoglycerate mutase (412 aa).

Belongs to the BPG-independent phosphoglycerate mutase family. A-PGAM subfamily.

The catalysed reaction is (2R)-2-phosphoglycerate = (2R)-3-phosphoglycerate. Its pathway is carbohydrate degradation; glycolysis; pyruvate from D-glyceraldehyde 3-phosphate: step 3/5. Its function is as follows. Catalyzes the interconversion of 2-phosphoglycerate and 3-phosphoglycerate. The sequence is that of 2,3-bisphosphoglycerate-independent phosphoglycerate mutase from Methanobrevibacter smithii (strain ATCC 35061 / DSM 861 / OCM 144 / PS).